The chain runs to 471 residues: tRNA-2-methylthio-N(6)-dimethylallyladenosine synthase (471 aa).

In terms of domain architecture, MTTase N-terminal spans 31–149 (LYYHIETYGC…FPQLLWEALN (119 aa)). 6 residues coordinate [4Fe-4S] cluster: Cys-40, Cys-76, Cys-110, Cys-186, Cys-190, and Cys-193. The region spanning 172–402 (RDSNLKAWVN…IELQNKISLE (231 aa)) is the Radical SAM core domain. In terms of domain architecture, TRAM spans 405-468 (AELRGKIVEV…AWTMQGELVE (64 aa)).

This sequence belongs to the methylthiotransferase family. MiaB subfamily. Monomer. [4Fe-4S] cluster is required as a cofactor.

It is found in the cytoplasm. The catalysed reaction is N(6)-dimethylallyladenosine(37) in tRNA + (sulfur carrier)-SH + AH2 + 2 S-adenosyl-L-methionine = 2-methylsulfanyl-N(6)-dimethylallyladenosine(37) in tRNA + (sulfur carrier)-H + 5'-deoxyadenosine + L-methionine + A + S-adenosyl-L-homocysteine + 2 H(+). Its function is as follows. Catalyzes the methylthiolation of N6-(dimethylallyl)adenosine (i(6)A), leading to the formation of 2-methylthio-N6-(dimethylallyl)adenosine (ms(2)i(6)A) at position 37 in tRNAs that read codons beginning with uridine. This is tRNA-2-methylthio-N(6)-dimethylallyladenosine synthase from Thermoanaerobacter pseudethanolicus (strain ATCC 33223 / 39E) (Clostridium thermohydrosulfuricum).